Consider the following 86-residue polypeptide: MERKQRRTLVGRVVSDKMDKTITVVVETKRNHPVYGKRINYSKKYKAHDENNIAKAGDIVRIMETRPLSATKRFRLVEVVEEAVII.

This sequence belongs to the universal ribosomal protein uS17 family. As to quaternary structure, part of the 30S ribosomal subunit.

Functionally, one of the primary rRNA binding proteins, it binds specifically to the 5'-end of 16S ribosomal RNA. This is Small ribosomal subunit protein uS17 from Streptococcus mutans serotype c (strain ATCC 700610 / UA159).